We begin with the raw amino-acid sequence, 149 residues long: Protein AIM7 (149 aa).

N-acetylserine is present on S2. One can recognise an ADF-H domain in the interval 3-147 (NLYKIGTETR…DVEELREQLE (145 aa)). At S137 the chain carries Phosphoserine.

This sequence belongs to the actin-binding proteins ADF family. GMF subfamily.

The protein resides in the cytoplasm. Its subcellular location is the nucleus. Functionally, may be involved in mitochondrial organization and biogenesis. This chain is Protein AIM7 (AIM7), found in Saccharomyces cerevisiae (strain ATCC 204508 / S288c) (Baker's yeast).